Consider the following 284-residue polypeptide: Polyamine aminopropyltransferase (284 aa).

The PABS domain maps to 2–237; it reads ELWYTEKHTE…GHWLFGFASK (236 aa). Residue Q31 coordinates S-methyl-5'-thioadenosine. H62 and D86 together coordinate spermidine. Residues E106 and 137–138 contribute to the S-methyl-5'-thioadenosine site; that span reads DG. D155 serves as the catalytic Proton acceptor. 155 to 158 contacts spermidine; sequence DSTD. P162 lines the S-methyl-5'-thioadenosine pocket.

It belongs to the spermidine/spermine synthase family. In terms of assembly, homodimer or homotetramer.

Its subcellular location is the cytoplasm. The catalysed reaction is S-adenosyl 3-(methylsulfanyl)propylamine + putrescine = S-methyl-5'-thioadenosine + spermidine + H(+). Its pathway is amine and polyamine biosynthesis; spermidine biosynthesis; spermidine from putrescine: step 1/1. Functionally, catalyzes the irreversible transfer of a propylamine group from the amino donor S-adenosylmethioninamine (decarboxy-AdoMet) to putrescine (1,4-diaminobutane) to yield spermidine. The protein is Polyamine aminopropyltransferase of Clostridium botulinum (strain Eklund 17B / Type B).